Consider the following 206-residue polypeptide: Riboflavin transporter RibU (206 aa).

6 consecutive transmembrane segments (helical) span residues 7–27 (MVLI…ILQF), 42–62 (IIPV…IILF), 79–99 (WIGV…VWFF), 113–133 (IVLA…FYAL), 147–169 (IFAG…PTYL), and 173–195 (VLPF…VTVF).

The protein belongs to the prokaryotic riboflavin transporter (P-RFT) (TC 2.A.87) family. In E.coli forms a stable energy-coupling factor (ECF) transporter complex composed of 2 membrane-embedded substrate-binding protein (S component), 2 ATP-binding proteins (A and A' components) and 2 transmembrane proteins (T component), probably with a stoichiometry of 2:1:1:2. May be able to interact with more than 1 S component at a time.

The protein resides in the cell membrane. Functionally, mediates riboflavin uptake, may also transport FMN and roseoflavin. Probably a riboflavin-binding protein that interacts with the energy-coupling factor (ECF) ABC-transporter complex. Unlike classic ABC transporters this ECF transporter provides the energy necessary to transport a number of different substrates. The substrates themselves are bound by transmembrane, not extracytoplasmic soluble proteins. Uptake of riboflavin into proteosomes containing EcfA1A2T and RibU has been demonstrated. Uptake requires hydrolyzable Mg-ATP. In Lactococcus lactis subsp. cremoris (strain MG1363), this protein is Riboflavin transporter RibU (ribU).